The primary structure comprises 408 residues: Phosphoenolpyruvate/phosphate translocator 1, chloroplastic (408 aa).

A chloroplast-targeting transit peptide spans M1–A85. A86 carries the N-acetylalanine modification. A run of 8 helical transmembrane segments spans residues V105 to Y125, M137 to L157, I165 to L185, F198 to L218, P222 to I242, I283 to F303, I324 to L346, and V377 to S396. The EamA domain maps to I124 to S241.

It belongs to the TPT transporter family. PPT (TC 2.A.7.9) subfamily. As to expression, expressed in root columella, lateral root cap and root vasculature tissue. In leaves, highly expressed in xylem parenchyma cells. In flowers, expressed in sepals, petals, filaments of the stamens, anthers and stigma.

It is found in the plastid. Its subcellular location is the chloroplast membrane. Its function is as follows. Phosphoenolpyruvate/phosphate translocator that transports phosphoenolpyruvate (PEP), 2-phosphoglycerate, 3-phosphoglycerate and dihydroxyacetone phosphate. Imports PEP to the chloroplast stroma as one substrate of the shikimate pathway, from which aromatic amino acids and a variety of secondary products derive. Required for correct leaf mesophyll cell development and expression of chlorophyll a/b binding protein 3 (CAB3). This chain is Phosphoenolpyruvate/phosphate translocator 1, chloroplastic (PPT1), found in Arabidopsis thaliana (Mouse-ear cress).